The chain runs to 499 residues: Cytochrome P450 76T24 (499 aa).

Residues 3–23 (VDILLSLVLAFFGWAAIYFLT) form a helical membrane-spanning segment. N-linked (GlcNAc...) asparagine glycans are attached at residues Asn-55, Asn-76, Asn-279, and Asn-284. Residue Cys-442 participates in heme binding.

It belongs to the cytochrome P450 family.

The protein resides in the membrane. This is Cytochrome P450 76T24 from Catharanthus roseus (Madagascar periwinkle).